The sequence spans 495 residues: Alpha,alpha-trehalose-phosphate synthase [UDP-forming] 56 kDa subunit (495 aa).

2 residues coordinate D-glucose 6-phosphate: Y102 and D156. UDP is bound by residues R293 and K298. Residues R293 and K298 each contribute to the UDP-alpha-D-glucose site. A D-glucose 6-phosphate-binding site is contributed by R331. UDP is bound by residues I370 and L396–E400. UDP-alpha-D-glucose-binding positions include I370 and D392 to E400.

This sequence belongs to the glycosyltransferase 20 family. As to quaternary structure, the trehalose synthase complex is composed of the two catalytic subunits TPS1 and TPS2 and at least one of the two regulatory subunits TPS3 or TSL1.

Its subcellular location is the cytoplasm. The catalysed reaction is D-glucose 6-phosphate + UDP-alpha-D-glucose = alpha,alpha-trehalose 6-phosphate + UDP + H(+). It functions in the pathway carbohydrate biosynthesis. Activated by fructose 6-phosphate. Inorganic phosphate inhibits the synthase activity in the complex, but activates the synthase activity in the free monomeric form. In terms of biological role, synthase catalytic subunit of the trehalose synthase complex that catalyzes the production of trehalose from glucose-6-phosphate and UDP-alpha-D-glucose in a two step process. Can function independently of the complex. In Saccharomyces cerevisiae (strain ATCC 204508 / S288c) (Baker's yeast), this protein is Alpha,alpha-trehalose-phosphate synthase [UDP-forming] 56 kDa subunit.